A 137-amino-acid polypeptide reads, in one-letter code: Urease subunit beta (137 aa).

A disordered region spans residues 113–137; it reads NGHPNAGVKNDEGKQNANKESGDNR.

This sequence belongs to the urease beta subunit family. In terms of assembly, heterotrimer of UreA (gamma), UreB (beta) and UreC (alpha) subunits. Three heterotrimers associate to form the active enzyme.

It localises to the cytoplasm. The catalysed reaction is urea + 2 H2O + H(+) = hydrogencarbonate + 2 NH4(+). It functions in the pathway nitrogen metabolism; urea degradation; CO(2) and NH(3) from urea (urease route): step 1/1. This Staphylococcus carnosus (strain TM300) protein is Urease subunit beta.